The sequence spans 64 residues: Large ribosomal subunit protein bL33 (64 aa).

The protein belongs to the bacterial ribosomal protein bL33 family.

The sequence is that of Large ribosomal subunit protein bL33 from Prochlorococcus marinus (strain MIT 9313).